Here is a 472-residue protein sequence, read N- to C-terminus: Diaminopimelate decarboxylase (472 aa).

A disordered region spans residues M1–V23. K97 bears the N6-(pyridoxal phosphate)lysine mark. Residues G283 and E325–R328 each bind pyridoxal 5'-phosphate. R328, R369, and Y373 together coordinate substrate. Catalysis depends on C400, which acts as the Proton donor. Substrate-binding residues include E401 and Y430. Y430 serves as a coordination point for pyridoxal 5'-phosphate.

This sequence belongs to the Orn/Lys/Arg decarboxylase class-II family. LysA subfamily. As to quaternary structure, homodimer. It depends on pyridoxal 5'-phosphate as a cofactor.

It carries out the reaction meso-2,6-diaminopimelate + H(+) = L-lysine + CO2. It participates in amino-acid biosynthesis; L-lysine biosynthesis via DAP pathway; L-lysine from DL-2,6-diaminopimelate: step 1/1. Specifically catalyzes the decarboxylation of meso-diaminopimelate (meso-DAP) to L-lysine. In Mycobacterium leprae (strain TN), this protein is Diaminopimelate decarboxylase.